The sequence spans 275 residues: Shikimate dehydrogenase (NADP(+)) (275 aa).

Residues 19-21 (SIS) and threonine 66 each bind shikimate. The active-site Proton acceptor is lysine 70. Glutamate 82 is a binding site for NADP(+). Asparagine 91 and aspartate 106 together coordinate shikimate. Residues 129–133 (GAGGA), 153–158 (NRTYER), and isoleucine 219 each bind NADP(+). Tyrosine 221 contributes to the shikimate binding site. Glycine 242 contacts NADP(+).

It belongs to the shikimate dehydrogenase family. In terms of assembly, homodimer.

The catalysed reaction is shikimate + NADP(+) = 3-dehydroshikimate + NADPH + H(+). Its pathway is metabolic intermediate biosynthesis; chorismate biosynthesis; chorismate from D-erythrose 4-phosphate and phosphoenolpyruvate: step 4/7. In terms of biological role, involved in the biosynthesis of the chorismate, which leads to the biosynthesis of aromatic amino acids. Catalyzes the reversible NADPH linked reduction of 3-dehydroshikimate (DHSA) to yield shikimate (SA). This Dictyoglomus turgidum (strain DSM 6724 / Z-1310) protein is Shikimate dehydrogenase (NADP(+)).